We begin with the raw amino-acid sequence, 209 residues long: Mitochondrial import inner membrane translocase subunit Tim23 (209 aa).

3 consecutive transmembrane segments (helical) span residues 73–93 (FELA…FGAV), 125–145 (ALWA…GVII), and 180–200 (GGLA…WEHI).

It belongs to the Tim17/Tim22/Tim23 family. In terms of assembly, component of the TIM23 complex at least composed of timm23, timm17 and timm50. The complex interacts with the timm44 component of the PAM complex.

Its subcellular location is the mitochondrion inner membrane. Essential component of the TIM23 complex, a complex that mediates the translocation of transit peptide-containing proteins across the mitochondrial inner membrane. The protein is Mitochondrial import inner membrane translocase subunit Tim23 (timm23) of Xenopus tropicalis (Western clawed frog).